A 61-amino-acid polypeptide reads, in one-letter code: Small ribosomal subunit protein uS14B (61 aa).

Zn(2+)-binding residues include C24, C27, C40, and C43.

Belongs to the universal ribosomal protein uS14 family. Zinc-binding uS14 subfamily. As to quaternary structure, part of the 30S ribosomal subunit. Contacts proteins S3 and S10. Zn(2+) is required as a cofactor.

In terms of biological role, binds 16S rRNA, required for the assembly of 30S particles and may also be responsible for determining the conformation of the 16S rRNA at the A site. This is Small ribosomal subunit protein uS14B from Oceanobacillus iheyensis (strain DSM 14371 / CIP 107618 / JCM 11309 / KCTC 3954 / HTE831).